We begin with the raw amino-acid sequence, 514 residues long: Prolyl 3,4-dihydroxylase OGFOD1 (514 aa).

The 108-residue stretch at 114–221 (GAVDCSCNIY…RVSISGWFHT (108 aa)) folds into the Fe2OG dioxygenase domain. Positions 132 and 134 each coordinate Fe cation. A 2-oxoglutarate-binding site is contributed by tyrosine 146. Residue histidine 200 participates in Fe cation binding. A 2-oxoglutarate-binding site is contributed by arginine 212.

The protein belongs to the TPA1 family. In terms of assembly, monomer and homodimer. The cofactor is Fe(2+). L-ascorbate serves as cofactor.

It catalyses the reaction [ribosomal protein uS12]-L-proline + 2-oxoglutarate + O2 = [ribosomal protein uS12]-(3S)-3-hydroxy-L-proline + succinate + CO2. The enzyme catalyses [ribosomal protein uS12]-(3S)-3-hydroxy-L-proline + 2-oxoglutarate + O2 = [ribosomal protein uS12]-(3S)-3,4-dihydroxy-L-proline + succinate + CO2. Its function is as follows. Prolyl 3,4-dihydroxylase that catalyzes 3,4-dihydroxylation of 'Pro-61' of small ribosomal subunit uS12 (RPS23), thereby regulating protein translation termination efficiency. This chain is Prolyl 3,4-dihydroxylase OGFOD1 (Ogd), found in Ostreococcus tauri.